A 194-amino-acid polypeptide reads, in one-letter code: 7-methyl-GTP pyrophosphatase (194 aa).

Catalysis depends on Asp71, which acts as the Proton acceptor.

The protein belongs to the Maf family. YceF subfamily. The cofactor is a divalent metal cation.

Its subcellular location is the cytoplasm. The enzyme catalyses N(7)-methyl-GTP + H2O = N(7)-methyl-GMP + diphosphate + H(+). In terms of biological role, nucleoside triphosphate pyrophosphatase that hydrolyzes 7-methyl-GTP (m(7)GTP). May have a dual role in cell division arrest and in preventing the incorporation of modified nucleotides into cellular nucleic acids. The protein is 7-methyl-GTP pyrophosphatase of Aromatoleum aromaticum (strain DSM 19018 / LMG 30748 / EbN1) (Azoarcus sp. (strain EbN1)).